The following is a 237-amino-acid chain: Isoprenyl transferase (237 aa).

D14 is a catalytic residue. Residue D14 participates in Mg(2+) binding. Substrate is bound by residues 15 to 18 (GNGR), W19, R27, H31, and 59 to 61 (STE). Catalysis depends on N62, which acts as the Proton acceptor. Substrate contacts are provided by residues W63, R65, R184, and 190-192 (RIS). A Mg(2+)-binding site is contributed by E203.

Belongs to the UPP synthase family. In terms of assembly, homodimer. The cofactor is Mg(2+).

Catalyzes the condensation of isopentenyl diphosphate (IPP) with allylic pyrophosphates generating different type of terpenoids. This Helicobacter hepaticus (strain ATCC 51449 / 3B1) protein is Isoprenyl transferase.